Consider the following 208-residue polypeptide: Vacuolar iron transporter homolog 5 (208 aa).

Over 1–41 (MAAMMNNERSSSNKLQVDAENPAAVGDELDLAARANWLRAA) the chain is Cytoplasmic. A helical transmembrane segment spans residues 42 to 62 (VLGANDGLVSTASLMLGVGAV). Topologically, residues 63 to 69 (KAEARAM) are vacuolar. Residues 70-90 (VISGFAGLLAGACSMAIGEFV) form a helical membrane-spanning segment. The Cytoplasmic portion of the chain corresponds to 91 to 125 (SVCSQRDVELAQLERDGKRGGEEEKALPSPAQAAA). The chain crosses the membrane as a helical span at residues 126–146 (ASAMAFSVGAVVPLLAAGFIV). The Vacuolar segment spans residues 147–151 (NYRLR). The chain crosses the membrane as a helical span at residues 152–172 (IAVVVAVASVALAAFGCVGAV). Residues 173–184 (LGRAAVARSSAR) are Cytoplasmic-facing. The helical transmembrane segment at 185–205 (VVLGGWAAMGITFGLMRLFKA) threads the bilayer. Over 206-208 (SGI) the chain is Vacuolar.

It belongs to the CCC1 family.

It is found in the vacuole membrane. It catalyses the reaction Fe(2+)(in) = Fe(2+)(out). Functionally, probable vacuolar iron transporter that may be involved in the regulation of iron distribution throughout the plant. The polypeptide is Vacuolar iron transporter homolog 5 (Oryza sativa subsp. japonica (Rice)).